Consider the following 895-residue polypeptide: Dystroglycan 1 (895 aa).

Residues Met-1–Ser-29 form the signal peptide. A required for laminin recognition region spans residues His-30 to Pro-408. Residues Ser-49–Thr-71 are O-glycosylated at one site. Asn-141 is a glycosylation site (N-linked (GlcNAc...) asparagine). A disulfide bond links Cys-182 and Cys-264. The interval Ala-316 to Ser-485 is mucin-like domain. O-linked (Man6P...) threonine glycosylation is found at Thr-317, Thr-319, and Thr-379. Residues Thr-381 to Lys-500 are disordered. Polar residues predominate over residues Ala-393–Pro-403. The span at Pro-413–Arg-447 shows a compositional bias: low complexity. The O-glycosylated at seven sites with GalNAc stretch occupies residues Thr-463–Ser-485. Residues Lys-603–Ser-712 enclose the Peptidase S72 domain. Residues Asn-641, Asn-649, and Asn-661 are each glycosylated (N-linked (GlcNAc...) asparagine). The Extracellular portion of the chain corresponds to Ser-654–Val-749. Cys-669 and Cys-713 are joined by a disulfide. The segment at Pro-724 to Asp-747 is disordered. A compositionally biased stretch (basic and acidic residues) spans Val-736–Asp-747. A helical transmembrane segment spans residues Tyr-750 to Tyr-775. A Nuclear localization signal motif is present at residues Arg-776–Lys-782. Residues Arg-776–Pro-895 are Cytoplasmic-facing. At Thr-790 the chain carries Phosphothreonine. The required for interaction with CAV3 stretch occupies residues Leu-819–Pro-895. Residues Lys-823–Pro-895 form a disordered region. A compositionally biased stretch (polar residues) spans Pro-832 to Thr-846. The span at Ser-859–Thr-870 shows a compositional bias: pro residues. A required for binding DMD and UTRN region spans residues Pro-880 to Pro-895. Positions Pro-889 to Tyr-892 match the PPXY motif motif. Tyr-892 is modified (phosphotyrosine; by SRC).

As to quaternary structure, monomer. Heterodimer of alpha- and beta-dystroglycan subunits which are the central components of the dystrophin-glycoprotein complex. This complex then can form a dystrophin-associated glycoprotein complex (DGC) which is composed of three subcomplexes: a cytoplasmic complex comprised of DMD (or UTRN), DTNA and a number of syntrophins, such as SNTB1, SNTB2, SNTG1 and SNTG2, the transmembrane dystroglycan complex, and the sarcoglycan-sarcospan complex. Interacts (via the N-terminal of alphaDAG1) with LARGE1; the interaction enhances laminin binding. Interacts with SGCD. Interacts with AGR2 and AGR3. Interacts (betaDAG1) with DMD; the interaction is inhibited by phosphorylation on the PPXY motif. Interacts (betaDAG1, via its PPXY motif) with UTRN (via its WWW and ZZ domains); the interaction is inhibited by phosphorylation on the PPXY motif. Interacts (betaDAG1, via its phosphorylated PPXY motif) with the SH2 domain-containing proteins, FYN, CSK, NCK and SHC. Interacts (betaDAG1) with CAV3 (via a central WW-like domain); the interaction disrupts the binding of DMD. BetaDAG1 directly interacts with ANK3, but not with ANK2; this interaction does not interfere with DMD-binding and is required for retention at costameres. Identified in a dystroglycan complex that contains at least PRX, DRP2, UTRN, DMD and DAG1. Interacts with POMGNT1. BetaDAG1 interacts with CD93. O-glycosylated. POMGNT1 catalyzes the initial addition of N-acetylglucosamine, giving rise to the GlcNAc(beta1-2)Man(alpha1-)O-Ser/Thr moiety and thus providing the necessary basis for the addition of further carbohydrate moieties. Heavily O-glycosylated comprising of up to two thirds of its mass and the carbohydrate composition differs depending on tissue type. Mucin-type O-glycosylation is important for ligand binding activity. O-mannosylation is found in high abundance in both brain and muscle where the most abundant glycan is Sia-alpha-2-3-Gal-beta-1-4-Glc-NAc-beta-1-2-Man. In muscle, glycosylation on Thr-317, Thr-319 and Thr-379 by a phosphorylated O-mannosyl glycan with the structure 2-(N-acetylamido)-2-deoxygalactosyl-beta-1,3-2-(N-acetylamido)-2-deoxyglucosyl-beta-1,4-6-phosphomannose is mediated by like-acetylglucosaminyltransferase (LARGE1) protein amd is required for laminin binding. O-glycosylated in the N-terminal region with a core 1 or possibly core 8 glycan. The brain form displays a unique glycosylation pattern which is absent in other tissues; this form shows enhanced binding to laminin LAMA5 compared to the skeletal muscle form. In terms of processing, N-glycosylated. Post-translationally, autolytic cleavage produces the alpha and beta subunits. In cutaneous cells, as well as in certain pathological conditions, shedding of beta-dystroglycan can occur releasing a peptide of about 30 kDa. SRC-mediated phosphorylation of the PPXY motif of the beta subunit recruits SH2 domain-containing proteins, but inhibits binding to WWW domain-containing proteins, DMD and UTRN. This phosphorylation also inhibits nuclear entry. In terms of tissue distribution, expressed in brain (at protein level). Expressed in the myelin sheath of peripheral nerves.

Its subcellular location is the secreted. The protein resides in the extracellular space. It is found in the cell membrane. The protein localises to the cytoplasm. It localises to the cytoskeleton. Its subcellular location is the nucleus. The protein resides in the nucleoplasm. It is found in the sarcolemma. The protein localises to the postsynaptic cell membrane. In terms of biological role, the dystroglycan complex is involved in a number of processes including laminin and basement membrane assembly, sarcolemmal stability, cell survival, peripheral nerve myelination, nodal structure, cell migration, and epithelial polarization. Functionally, extracellular peripheral glycoprotein that acts as a receptor for extracellular matrix proteins containing laminin-G domains. Receptor for laminin-2 (LAMA2) and agrin in peripheral nerve Schwann cells. Also acts as a receptor for laminin LAMA5. Transmembrane protein that plays important roles in connecting the extracellular matrix to the cytoskeleton. Acts as a cell adhesion receptor in both muscle and non-muscle tissues. Receptor for both DMD and UTRN and, through these interactions, scaffolds axin to the cytoskeleton. Also functions in cell adhesion-mediated signaling and implicated in cell polarity. In Bos taurus (Bovine), this protein is Dystroglycan 1.